The sequence spans 361 residues: MSKSALDPVEFLKGALEIPSPSGKERLVAEYLAEGMQKLGLKGFVDEADNARGQVGEGPVQVVLLGHIDTVPGQIPVRLEGGRLFGRGAVDAKGPFVAMIFAAAGLSEEARKRLTVHLVGATEEEAPSSKGARFVAPRLKPHYAVIGEPSGWEGITLGYKGRLLVKARREKDHFHSAHHEPNAAEELISYFVAIKAWAEAMNVGQRPFDQVQYTLRDFRVHPAELRQVAEMFFDLRLPPRLPPEEAIRHLTAYAPPTIELEFFGREVPYQGPKDTPLTRAFRQAIRKAGGRPVFKLKTGTSDMNVLAPHWPVPMVAYGPGDSTLDHTPYEHVEVAEFLKGIEVLRGALEALAQTHAGEKEG.

His67 is a binding site for Zn(2+). Asp69 is a catalytic residue. Position 91 (Asp91) interacts with Zn(2+). The active-site Proton acceptor is Glu124. The Zn(2+) site is built by Glu125, Glu148, and His326.

Belongs to the peptidase M20A family. LysK subfamily. Homotetramer and homooctamer. Zn(2+) is required as a cofactor. Co(2+) serves as cofactor.

It is found in the cytoplasm. It carries out the reaction [amino-group carrier protein]-C-terminal-gamma-(L-lysyl)-L-glutamate + H2O = [amino-group carrier protein]-C-terminal-L-glutamate + L-lysine. Its pathway is amino-acid biosynthesis; L-lysine biosynthesis via AAA pathway; L-lysine from L-alpha-aminoadipate (Thermus route): step 5/5. Catalyzes the release of L-lysine from [LysW]-gamma-L-lysine. In vitro, can deacetylate both N(2)-acetyl-L-lysine and N(2)-acetyl-L-ornithine. In Thermus thermophilus (strain ATCC BAA-163 / DSM 7039 / HB27), this protein is [LysW]-lysine hydrolase.